A 169-amino-acid polypeptide reads, in one-letter code: Lipoprotein signal peptidase (169 aa).

2 helical membrane-spanning segments follow: residues Phe56–Tyr76 and Gln84–Asp104. Residues Asp113 and Asp139 contribute to the active site. The chain crosses the membrane as a helical span at residues Trp132–Phe152.

It belongs to the peptidase A8 family.

It localises to the cell inner membrane. It catalyses the reaction Release of signal peptides from bacterial membrane prolipoproteins. Hydrolyzes -Xaa-Yaa-Zaa-|-(S,diacylglyceryl)Cys-, in which Xaa is hydrophobic (preferably Leu), and Yaa (Ala or Ser) and Zaa (Gly or Ala) have small, neutral side chains.. It functions in the pathway protein modification; lipoprotein biosynthesis (signal peptide cleavage). In terms of biological role, this protein specifically catalyzes the removal of signal peptides from prolipoproteins. In Chlorobium phaeovibrioides (strain DSM 265 / 1930) (Prosthecochloris vibrioformis (strain DSM 265)), this protein is Lipoprotein signal peptidase.